The following is a 115-amino-acid chain: MKKKNRIKKNDEFQAVFQKGQSNANRQFVVYKLDKEKQPHFRIGLSVSKKIGNAVVRNRIKRMIRQSIIELKDEIDSGKDFVIIARKPCAEMTYEELKKSLIHVFKRSGMKRIKK.

The protein belongs to the RnpA family. As to quaternary structure, consists of a catalytic RNA component (M1 or rnpB) and a protein subunit.

The enzyme catalyses Endonucleolytic cleavage of RNA, removing 5'-extranucleotides from tRNA precursor.. Functionally, RNaseP catalyzes the removal of the 5'-leader sequence from pre-tRNA to produce the mature 5'-terminus. It can also cleave other RNA substrates such as 4.5S RNA. The protein component plays an auxiliary but essential role in vivo by binding to the 5'-leader sequence and broadening the substrate specificity of the ribozyme. This is Ribonuclease P protein component from Bacillus mycoides (strain KBAB4) (Bacillus weihenstephanensis).